The following is a 292-amino-acid chain: 33 kDa chaperonin (292 aa).

Cystine bridges form between Cys-230–Cys-232 and Cys-263–Cys-266.

The protein belongs to the HSP33 family. In terms of processing, under oxidizing conditions two disulfide bonds are formed involving the reactive cysteines. Under reducing conditions zinc is bound to the reactive cysteines and the protein is inactive.

The protein resides in the cytoplasm. Redox regulated molecular chaperone. Protects both thermally unfolding and oxidatively damaged proteins from irreversible aggregation. Plays an important role in the bacterial defense system toward oxidative stress. This chain is 33 kDa chaperonin, found in Enterobacter sp. (strain 638).